Consider the following 555-residue polypeptide: Connector enhancer of kinase suppressor of ras 3 (555 aa).

Residues 7–72 (WSPKQVVDWT…LEAVDLLCAL (66 aa)) form the SAM domain. The 95-residue stretch at 80–174 (NMKNLVLKLR…TAVQKDCLVA (95 aa)) folds into the CRIC domain. Residues 211–293 (EVHLPNVRPG…GVVLLLKKRP (83 aa)) enclose the PDZ domain. Disordered stretches follow at residues 308-333 (RWKP…MDAS), 348-391 (PPPA…LDQE), and 518-538 (PFQE…ASSG). Residues 311–329 (PPLVQTSPPPTTTQSPEST) are compositionally biased toward low complexity. The region spanning 325 to 546 (SPESTMDASL…SGEPSLLVSW (222 aa)) is the DUF1170 domain. Residues Ser381 and Ser383 each carry the phosphoserine modification.

Belongs to the CNKSR family. As to quaternary structure, interacts with epithelial sodium channel ENaC. Interacts directly with SCNN1A (ENaC subunit alpha) and SCNN1B (ENaC subunit beta) C-terminal tails. Interacts with ENaC regulatory proteins NEDD4L, RAF1 and SGK1.

Its subcellular location is the cytoplasm. The protein localises to the apical cell membrane. In terms of biological role, involved in transepithelial sodium transport. Regulates aldosterone-induced and epithelial sodium channel (ENaC)-mediated sodium transport through regulation of ENaC cell surface expression. Acts as a scaffold protein coordinating the assembly of an ENaC-regulatory complex (ERC). The sequence is that of Connector enhancer of kinase suppressor of ras 3 (Cnksr3) from Rattus norvegicus (Rat).